A 247-amino-acid chain; its full sequence is Malonyl-[acyl-carrier protein] O-methyltransferase (247 aa).

The protein belongs to the methyltransferase superfamily.

The enzyme catalyses malonyl-[ACP] + S-adenosyl-L-methionine = malonyl-[ACP] methyl ester + S-adenosyl-L-homocysteine. It participates in cofactor biosynthesis; biotin biosynthesis. Functionally, converts the free carboxyl group of a malonyl-thioester to its methyl ester by transfer of a methyl group from S-adenosyl-L-methionine (SAM). It allows to synthesize pimeloyl-ACP via the fatty acid synthetic pathway. The sequence is that of Malonyl-[acyl-carrier protein] O-methyltransferase from Buchnera aphidicola subsp. Baizongia pistaciae (strain Bp).